The following is a 288-amino-acid chain: Pyridoxal kinase PdxY (288 aa).

Substrate-binding positions include Ser-9 and 44-45; that span reads TQ. Positions 111, 148, and 181 each coordinate ATP. Residue Asp-224 coordinates substrate.

The protein belongs to the pyridoxine kinase family. PdxY subfamily. As to quaternary structure, homodimer. The cofactor is Mg(2+).

It catalyses the reaction pyridoxal + ATP = pyridoxal 5'-phosphate + ADP + H(+). It functions in the pathway cofactor metabolism; pyridoxal 5'-phosphate salvage; pyridoxal 5'-phosphate from pyridoxal: step 1/1. Pyridoxal kinase involved in the salvage pathway of pyridoxal 5'-phosphate (PLP). Catalyzes the phosphorylation of pyridoxal to PLP. This chain is Pyridoxal kinase PdxY, found in Haemophilus influenzae (strain PittEE).